A 448-amino-acid chain; its full sequence is Fibulin-5 (448 aa).

The first 23 residues, 1-23 (MPGIKRILTVTILALCLPSPGNA), serve as a signal peptide directing secretion. Positions 42–82 (DIDECRTIPEACRGDMMCVNQNGRYLCIPRTNPVYRGPYSN) constitute an EGF-like 1; calcium-binding domain. 17 disulfide bridges follow: Cys-46-Cys-59, Cys-53-Cys-68, Cys-131-Cys-144, Cys-138-Cys-153, Cys-155-Cys-166, Cys-172-Cys-181, Cys-177-Cys-190, Cys-192-Cys-205, Cys-211-Cys-221, Cys-217-Cys-230, Cys-232-Cys-245, Cys-251-Cys-262, Cys-258-Cys-271, Cys-273-Cys-286, Cys-292-Cys-305, Cys-299-Cys-314, and Cys-320-Cys-332. The Cell attachment site signature appears at 54-56 (RGD). Residues 127–167 (DVDECATDSHQCNPTQICINTEGGYTCSCTDGYWLLEGQCL) enclose the EGF-like 2; calcium-binding domain. An EGF-like 3; calcium-binding domain is found at 168-206 (DIDECRYGYCQQLCANVPGSYSCTCNPGFTLNEDGRSCQ). The 40-residue stretch at 207-246 (DVNECATENPCVQTCVNTYGSFICRCDPGYELEEDGVHCS) folds into the EGF-like 4; calcium-binding domain. The interaction with LOXL1 stretch occupies residues 245–448 (CSDMDECSFS…LRIYVSQYPF (204 aa)). Positions 247–287 (DMDECSFSEFLCQHECVNQPGTYFCSCPPGYILLDDNRSCQ) constitute an EGF-like 5; calcium-binding domain. Residues Asn-283 and Asn-296 are each glycosylated (N-linked (GlcNAc...) asparagine). The EGF-like 6; calcium-binding domain occupies 288 to 333 (DINECEHRNHTCNLQQTCYNLQGGFKCIDPIRCEEPYLRISDNRCM).

Belongs to the fibulin family. In terms of assembly, homodimer. Monomer, homodimerizes in presence of Ca(2+). Interacts with ELN. Interacts (via N-terminus) with the integrins ITGAV/ITGB3, ITGAV/ITGB5 and ITGA9/ITGB1. Interacts with FBN1 (via N-terminal domain). Forms a ternary complex with ELN and FBN1. Interacts with EFEMP2 with moderate affinity. Interacts with LOXL1. In terms of processing, N-glycosylated.

The protein localises to the secreted. It is found in the extracellular space. The protein resides in the extracellular matrix. Its function is as follows. Essential for elastic fiber formation, is involved in the assembly of continuous elastin (ELN) polymer and promotes the interaction of microfibrils and ELN. Stabilizes and organizes elastic fibers in the skin, lung and vasculature. Promotes adhesion of endothelial cells through interaction of integrins and the RGD motif. Vascular ligand for integrin receptors which may play a role in vascular development and remodeling. May act as an adapter that mediates the interaction between FBN1 and ELN. The chain is Fibulin-5 (FBLN5) from Pongo abelii (Sumatran orangutan).